A 227-amino-acid polypeptide reads, in one-letter code: Octanoyltransferase (227 aa).

A BPL/LPL catalytic domain is found at 31–209; it reads ANTIDEIWLV…VFLSLLGGTN (179 aa). Residues 71–78, 139–141, and 152–154 each bind substrate; these read RGGKITYH, SIG, and GLA. The active-site Acyl-thioester intermediate is C170.

The protein belongs to the LipB family.

The protein resides in the cytoplasm. It catalyses the reaction octanoyl-[ACP] + L-lysyl-[protein] = N(6)-octanoyl-L-lysyl-[protein] + holo-[ACP] + H(+). Its pathway is protein modification; protein lipoylation via endogenous pathway; protein N(6)-(lipoyl)lysine from octanoyl-[acyl-carrier-protein]: step 1/2. In terms of biological role, catalyzes the transfer of endogenously produced octanoic acid from octanoyl-acyl-carrier-protein onto the lipoyl domains of lipoate-dependent enzymes. Lipoyl-ACP can also act as a substrate although octanoyl-ACP is likely to be the physiological substrate. The polypeptide is Octanoyltransferase (Baumannia cicadellinicola subsp. Homalodisca coagulata).